A 222-amino-acid polypeptide reads, in one-letter code: Charged multivesicular body protein 4b (222 aa).

2 disordered regions span residues 1 to 21 (MSLIGKLFGTGGKGAKGPSPQ) and 183 to 222 (GPETVPLPNVPAAVLPAKPVKKKQEEDDDDMRELENWATA). A coiled-coil region spans residues 21–182 (QEAIQKLRDT…ELDKNLLEVQ (162 aa)). The span at 188–200 (PLPNVPAAVLPAK) shows a compositional bias: low complexity.

This sequence belongs to the SNF7 family. As to quaternary structure, probable core component of the endosomal sorting required for transport complex III (ESCRT-III). ESCRT-III components are thought to multimerize to form a flat lattice on the perimeter membrane of the endosome.

It localises to the cytoplasm. The protein localises to the cytosol. It is found in the late endosome membrane. Its subcellular location is the midbody. In terms of biological role, probable core component of the endosomal sorting required for transport complex III (ESCRT-III) which is involved in multivesicular bodies (MVBs) formation and sorting of endosomal cargo proteins into MVBs. MVBs contain intraluminal vesicles (ILVs) that are generated by invagination and scission from the limiting membrane of the endosome and mostly are delivered to lysosomes enabling degradation of membrane proteins, such as stimulated growth factor receptors, lysosomal enzymes and lipids. The protein is Charged multivesicular body protein 4b (chmp4b) of Xenopus tropicalis (Western clawed frog).